The sequence spans 130 residues: Small ribosomal subunit protein uS9 (130 aa).

The protein belongs to the universal ribosomal protein uS9 family.

The chain is Small ribosomal subunit protein uS9 from Burkholderia mallei (strain NCTC 10247).